The chain runs to 474 residues: tRNA modification GTPase MnmE (474 aa).

(6S)-5-formyl-5,6,7,8-tetrahydrofolate-binding residues include R35, E92, and K135. The TrmE-type G domain maps to G231–G396. N241 is a binding site for K(+). GTP-binding positions include N241–S246, T260–T266, D285–G288, and S377–R379. Mg(2+) is bound at residue S245. The K(+) site is built by T260, I262, and T265. Residue T266 participates in Mg(2+) binding. K474 is a binding site for (6S)-5-formyl-5,6,7,8-tetrahydrofolate.

Belongs to the TRAFAC class TrmE-Era-EngA-EngB-Septin-like GTPase superfamily. TrmE GTPase family. In terms of assembly, homodimer. Heterotetramer of two MnmE and two MnmG subunits. Requires K(+) as cofactor.

The protein resides in the cytoplasm. Exhibits a very high intrinsic GTPase hydrolysis rate. Involved in the addition of a carboxymethylaminomethyl (cmnm) group at the wobble position (U34) of certain tRNAs, forming tRNA-cmnm(5)s(2)U34. This Ralstonia nicotianae (strain ATCC BAA-1114 / GMI1000) (Ralstonia solanacearum) protein is tRNA modification GTPase MnmE.